The primary structure comprises 493 residues: Alpha-amylase-related protein (493 aa).

Residues 1–19 form the signal peptide; sequence MFKFALTLTLCLAGSLSLA. A Pyrrolidone carboxylic acid modification is found at Gln-20. Cys-47 and Cys-103 are disulfide-bonded. Residues Asn-117, Gln-168, and Asp-177 each contribute to the Ca(2+) site. A disulfide bridge links Cys-156 with Cys-170. Chloride is bound at residue Arg-205. Asp-207 serves as the catalytic Nucleophile. His-211 is a Ca(2+) binding site. Glu-244 functions as the Proton donor in the catalytic mechanism. Chloride-binding residues include Asn-307 and Arg-342. Intrachain disulfides connect Cys-375–Cys-381, Cys-417–Cys-440, and Cys-447–Cys-459.

This sequence belongs to the glycosyl hydrolase 13 family. As to quaternary structure, monomer. Ca(2+) is required as a cofactor. Chloride serves as cofactor.

The protein resides in the secreted. It carries out the reaction Endohydrolysis of (1-&gt;4)-alpha-D-glucosidic linkages in polysaccharides containing three or more (1-&gt;4)-alpha-linked D-glucose units.. The chain is Alpha-amylase-related protein (Amyrel) from Drosophila sechellia (Fruit fly).